The sequence spans 297 residues: Virulence genes transcriptional activator (297 aa).

Residues methionine 1–threonine 61 form the HTH lysR-type domain. Positions phenylalanine 21–serine 40 form a DNA-binding region, H-T-H motif.

Belongs to the LysR transcriptional regulatory family.

It localises to the cytoplasm. Positive regulator for the plasmid-encoded virulence factors SpvA, SpvB, and SpvC. The polypeptide is Virulence genes transcriptional activator (mkaC) (Salmonella typhimurium (strain LT2 / SGSC1412 / ATCC 700720)).